A 391-amino-acid polypeptide reads, in one-letter code: Salivary protein TRIO (391 aa).

The N-terminal stretch at 1–24 is a signal peptide; the sequence is MCRGLSAVLILLVSLSAQLHVVVG. Asn-323 is a glycosylation site (N-linked (GlcNAc...) asparagine).

In terms of tissue distribution, female salivary gland (at protein level). Female saliva (at protein level). Not detected in female midgut, head and carcass (at protein level). Not detected in male tissues (at protein level).

The protein localises to the secreted. In terms of biological role, required for efficient probing on a mammalian host. Alters the local inflammatory response in the host skin following a mosquito bite by suppressing TNF-alpha/TNF expression. Functionally, (Microbial infection) Contributes to optimal transmission of Plasmodium berghei sporozoites to mice. Its function is as follows. (Microbial infection) Contributes to optimal transmission of Plasmodium falciparum sporozoites to mammalian host. This is Salivary protein TRIO from Anopheles gambiae (African malaria mosquito).